A 215-amino-acid chain; its full sequence is Probable phosphoglycerate mutase GpmB (215 aa).

Residues 8 to 15, 21 to 22, Arg58, 82 to 85, and 151 to 152 contribute to the substrate site; these read RHGETVWN, QG, ELNM, and GM. His9 acts as the Tele-phosphohistidine intermediate in catalysis. The active-site Proton donor/acceptor is the Glu82.

The protein belongs to the phosphoglycerate mutase family. GpmB subfamily.

It catalyses the reaction (2R)-2-phosphoglycerate = (2R)-3-phosphoglycerate. Its pathway is carbohydrate degradation; glycolysis; pyruvate from D-glyceraldehyde 3-phosphate: step 3/5. The sequence is that of Probable phosphoglycerate mutase GpmB from Yersinia enterocolitica serotype O:8 / biotype 1B (strain NCTC 13174 / 8081).